Reading from the N-terminus, the 82-residue chain is ATP synthase subunit c (82 aa).

2 helical membrane-spanning segments follow: residues 7 to 27 (LVAL…SIGI) and 53 to 73 (FILA…ALLF).

Belongs to the ATPase C chain family. As to quaternary structure, F-type ATPases have 2 components, F(1) - the catalytic core - and F(0) - the membrane proton channel. F(1) has five subunits: alpha(3), beta(3), gamma(1), delta(1), epsilon(1). F(0) has three main subunits: a(1), b(2) and c(10-14). The alpha and beta chains form an alternating ring which encloses part of the gamma chain. F(1) is attached to F(0) by a central stalk formed by the gamma and epsilon chains, while a peripheral stalk is formed by the delta and b chains.

The protein resides in the cell inner membrane. Its function is as follows. F(1)F(0) ATP synthase produces ATP from ADP in the presence of a proton or sodium gradient. F-type ATPases consist of two structural domains, F(1) containing the extramembraneous catalytic core and F(0) containing the membrane proton channel, linked together by a central stalk and a peripheral stalk. During catalysis, ATP synthesis in the catalytic domain of F(1) is coupled via a rotary mechanism of the central stalk subunits to proton translocation. Key component of the F(0) channel; it plays a direct role in translocation across the membrane. A homomeric c-ring of between 10-14 subunits forms the central stalk rotor element with the F(1) delta and epsilon subunits. In Acidovorax ebreus (strain TPSY) (Diaphorobacter sp. (strain TPSY)), this protein is ATP synthase subunit c.